Reading from the N-terminus, the 401-residue chain is Argininosuccinate synthase (401 aa).

8–16 (AYSGGLDTS) contributes to the ATP binding site. Tyr85 is a binding site for L-citrulline. Gly115 contacts ATP. 3 residues coordinate L-aspartate: Thr117, Asn121, and Asp122. Asn121 contacts L-citrulline. Arg125, Ser173, Glu258, and Tyr270 together coordinate L-citrulline.

This sequence belongs to the argininosuccinate synthase family. Type 1 subfamily. Homotetramer.

It localises to the cytoplasm. The enzyme catalyses L-citrulline + L-aspartate + ATP = 2-(N(omega)-L-arginino)succinate + AMP + diphosphate + H(+). It functions in the pathway amino-acid biosynthesis; L-arginine biosynthesis; L-arginine from L-ornithine and carbamoyl phosphate: step 2/3. This Staphylococcus aureus (strain Mu3 / ATCC 700698) protein is Argininosuccinate synthase.